A 256-amino-acid chain; its full sequence is Inositol-1-monophosphatase (256 aa).

The Mg(2+) site is built by Glu60, Asp77, Leu79, and Asp80. Position 60 (Glu60) interacts with substrate. Substrate-binding positions include 79–82 (LDGT), Arg178, and Asp207. Asp207 serves as a coordination point for Mg(2+).

Belongs to the inositol monophosphatase superfamily. Mg(2+) serves as cofactor.

The catalysed reaction is a myo-inositol phosphate + H2O = myo-inositol + phosphate. This Caulobacter vibrioides (strain ATCC 19089 / CIP 103742 / CB 15) (Caulobacter crescentus) protein is Inositol-1-monophosphatase (suhB).